A 253-amino-acid polypeptide reads, in one-letter code: Sugar fermentation stimulation protein homolog (253 aa).

Belongs to the SfsA family.

The chain is Sugar fermentation stimulation protein homolog from Chromohalobacter salexigens (strain ATCC BAA-138 / DSM 3043 / CIP 106854 / NCIMB 13768 / 1H11).